Here is a 189-residue protein sequence, read N- to C-terminus: ATP synthase subunit delta (189 aa).

This sequence belongs to the ATPase delta chain family. In terms of assembly, F-type ATPases have 2 components, F(1) - the catalytic core - and F(0) - the membrane proton channel. F(1) has five subunits: alpha(3), beta(3), gamma(1), delta(1), epsilon(1). F(0) has three main subunits: a(1), b(2) and c(10-14). The alpha and beta chains form an alternating ring which encloses part of the gamma chain. F(1) is attached to F(0) by a central stalk formed by the gamma and epsilon chains, while a peripheral stalk is formed by the delta and b chains.

It localises to the cell inner membrane. Its function is as follows. F(1)F(0) ATP synthase produces ATP from ADP in the presence of a proton or sodium gradient. F-type ATPases consist of two structural domains, F(1) containing the extramembraneous catalytic core and F(0) containing the membrane proton channel, linked together by a central stalk and a peripheral stalk. During catalysis, ATP synthesis in the catalytic domain of F(1) is coupled via a rotary mechanism of the central stalk subunits to proton translocation. This protein is part of the stalk that links CF(0) to CF(1). It either transmits conformational changes from CF(0) to CF(1) or is implicated in proton conduction. This Methylorubrum extorquens (strain PA1) (Methylobacterium extorquens) protein is ATP synthase subunit delta.